The chain runs to 356 residues: Butyrate kinase (356 aa).

The protein belongs to the acetokinase family.

It is found in the cytoplasm. The enzyme catalyses butanoate + ATP = butanoyl phosphate + ADP. The protein operates within lipid metabolism; butanoate metabolism. Its function is as follows. Catalyzes the conversion of butyryl-CoA through butyryl phosphate to butyrate. This is Butyrate kinase (buk) from Clostridium perfringens (strain 13 / Type A).